Consider the following 129-residue polypeptide: Small ribosomal subunit protein uS11 (129 aa).

The protein belongs to the universal ribosomal protein uS11 family. As to quaternary structure, part of the 30S ribosomal subunit. Interacts with proteins S7 and S18. Binds to IF-3.

In terms of biological role, located on the platform of the 30S subunit, it bridges several disparate RNA helices of the 16S rRNA. Forms part of the Shine-Dalgarno cleft in the 70S ribosome. The protein is Small ribosomal subunit protein uS11 of Bradyrhizobium diazoefficiens (strain JCM 10833 / BCRC 13528 / IAM 13628 / NBRC 14792 / USDA 110).